The sequence spans 78 residues: Large ribosomal subunit protein bL28 (78 aa).

The protein belongs to the bacterial ribosomal protein bL28 family.

The polypeptide is Large ribosomal subunit protein bL28 (Escherichia coli O139:H28 (strain E24377A / ETEC)).